The primary structure comprises 367 residues: tRNA-specific 2-thiouridylase MnmA (367 aa).

ATP-binding positions include 11–18 (AMSGGVDS) and Met37. The interval 97–99 (NPD) is interaction with target base in tRNA. The active-site Nucleophile is Cys102. Residues Cys102 and Cys199 are joined by a disulfide bond. Gly127 provides a ligand contact to ATP. The interval 149–151 (KDQ) is interaction with tRNA. Cys199 functions as the Cysteine persulfide intermediate in the catalytic mechanism. The tract at residues 311-312 (RY) is interaction with tRNA.

Belongs to the MnmA/TRMU family. In terms of assembly, interacts with TusE.

It is found in the cytoplasm. The catalysed reaction is S-sulfanyl-L-cysteinyl-[protein] + uridine(34) in tRNA + AH2 + ATP = 2-thiouridine(34) in tRNA + L-cysteinyl-[protein] + A + AMP + diphosphate + H(+). In terms of biological role, catalyzes the 2-thiolation of uridine at the wobble position (U34) of tRNA(Lys), tRNA(Glu) and tRNA(Gln), leading to the formation of s(2)U34, the first step of tRNA-mnm(5)s(2)U34 synthesis. Sulfur is provided by IscS, via a sulfur-relay system. Binds ATP and its substrate tRNAs. In Buchnera aphidicola subsp. Schizaphis graminum (strain Sg), this protein is tRNA-specific 2-thiouridylase MnmA.